The following is a 131-amino-acid chain: uncharacterized protein (131 aa).

4 consecutive transmembrane segments (helical) span residues 7-29 (LLKFLIQAFMWFAIASEFVSLLY), 49-69 (LVKVLNVIIIYELFTTLLIAL), 76-98 (LILIIDTAMIFFIRELLIVLFTY), and 102-124 (ELSEGIASALILGTLGILRFLYL).

It is found in the cell membrane. This is an uncharacterized protein from Aquifex aeolicus (strain VF5).